We begin with the raw amino-acid sequence, 302 residues long: Glycine--tRNA ligase alpha subunit (302 aa).

Belongs to the class-II aminoacyl-tRNA synthetase family. As to quaternary structure, tetramer of two alpha and two beta subunits.

It localises to the cytoplasm. It carries out the reaction tRNA(Gly) + glycine + ATP = glycyl-tRNA(Gly) + AMP + diphosphate. The sequence is that of Glycine--tRNA ligase alpha subunit from Edwardsiella ictaluri (strain 93-146).